The primary structure comprises 203 residues: Dephospho-CoA kinase (203 aa).

The region spanning 3-202 is the DPCK domain; sequence KIGLTGSIGM…MRIAKGDFRN (200 aa). 11–16 contributes to the ATP binding site; sequence GMGKST.

The protein belongs to the CoaE family.

The protein localises to the cytoplasm. It carries out the reaction 3'-dephospho-CoA + ATP = ADP + CoA + H(+). It participates in cofactor biosynthesis; coenzyme A biosynthesis; CoA from (R)-pantothenate: step 5/5. Functionally, catalyzes the phosphorylation of the 3'-hydroxyl group of dephosphocoenzyme A to form coenzyme A. The polypeptide is Dephospho-CoA kinase (Rhizobium etli (strain ATCC 51251 / DSM 11541 / JCM 21823 / NBRC 15573 / CFN 42)).